Reading from the N-terminus, the 196-residue chain is Translation machinery-associated protein 22 (196 aa).

In terms of domain architecture, SUI1 spans 97–168; the sequence is VIVKREARTK…EVVAYIHSLL (72 aa).

Belongs to the DENR family. Interacts with the 40S ribosomal subunit.

It localises to the cytoplasm. The polypeptide is Translation machinery-associated protein 22 (TMA22) (Candida glabrata (strain ATCC 2001 / BCRC 20586 / JCM 3761 / NBRC 0622 / NRRL Y-65 / CBS 138) (Yeast)).